The primary structure comprises 202 residues: Orotate phosphoribosyltransferase (202 aa).

5-phospho-alpha-D-ribose 1-diphosphate is bound by residues lysine 93 and 113–121 (EDIITTGGS). Orotate contacts are provided by threonine 117 and arginine 145.

This sequence belongs to the purine/pyrimidine phosphoribosyltransferase family. PyrE subfamily. In terms of assembly, homodimer. The cofactor is Mg(2+).

It catalyses the reaction orotidine 5'-phosphate + diphosphate = orotate + 5-phospho-alpha-D-ribose 1-diphosphate. It functions in the pathway pyrimidine metabolism; UMP biosynthesis via de novo pathway; UMP from orotate: step 1/2. Functionally, catalyzes the transfer of a ribosyl phosphate group from 5-phosphoribose 1-diphosphate to orotate, leading to the formation of orotidine monophosphate (OMP). This is Orotate phosphoribosyltransferase from Campylobacter jejuni subsp. jejuni serotype O:2 (strain ATCC 700819 / NCTC 11168).